We begin with the raw amino-acid sequence, 228 residues long: 7-cyano-7-deazaguanine synthase (228 aa).

Residue 9–19 (LSGGPDSTTVL) coordinates ATP. The Zn(2+) site is built by cysteine 193, cysteine 203, cysteine 206, and cysteine 209.

The protein belongs to the QueC family. Zn(2+) is required as a cofactor.

It catalyses the reaction 7-carboxy-7-deazaguanine + NH4(+) + ATP = 7-cyano-7-deazaguanine + ADP + phosphate + H2O + H(+). Its pathway is purine metabolism; 7-cyano-7-deazaguanine biosynthesis. Functionally, catalyzes the ATP-dependent conversion of 7-carboxy-7-deazaguanine (CDG) to 7-cyano-7-deazaguanine (preQ(0)). This is 7-cyano-7-deazaguanine synthase from Rickettsia rickettsii (strain Iowa).